The following is a 165-amino-acid chain: Putative BTB/POZ domain-containing protein At2g40440 (165 aa).

Positions Val24–Ala98 constitute a BTB domain.

It functions in the pathway protein modification; protein ubiquitination. May act as a substrate-specific adapter of an E3 ubiquitin-protein ligase complex (CUL3-RBX1-BTB) which mediates the ubiquitination and subsequent proteasomal degradation of target proteins. This is Putative BTB/POZ domain-containing protein At2g40440 from Arabidopsis thaliana (Mouse-ear cress).